Consider the following 751-residue polypeptide: Leucine-rich repeat-containing protein 56 homolog (751 aa).

Positions 1–149 (MKKSTVLDAR…IDKSRDNGQL (149 aa)) are disordered. Residues 13–22 (GPLPRRPQQP) show a composition bias toward pro residues. Polar residues-rich tracts occupy residues 28–39 (RNSSQVEKNNAR) and 60–87 (HSQS…NLNS). LRR repeat units follow at residues 210–235 (MPQL…NYAN), 236–256 (LRRL…GACA), 258–279 (VLEE…TEVS), 280–304 (STLQ…TLPQ), and 307–328 (KMKH…VELS). Disordered regions lie at residues 430-538 (SRSH…QRQQ), 645-698 (TCTH…EKDW), and 717-751 (EAAL…PVVF). Composition is skewed to polar residues over residues 456–471 (KNSQ…TNQG) and 662–671 (QQEQPTTAGA). The span at 717–738 (EAALKERVQGSKEVDGGGLEKV) shows a compositional bias: basic and acidic residues. The span at 739 to 751 (ESEDEEDVSPVVF) shows a compositional bias: acidic residues.

The protein belongs to the LRRC56 family.

It is found in the cell projection. The protein resides in the cilium. It localises to the flagellum. In terms of biological role, required for the assembly of dynein arms in the distal portion of flagellum axoneme. The chain is Leucine-rich repeat-containing protein 56 homolog from Trypanosoma brucei brucei (strain 927/4 GUTat10.1).